Consider the following 474-residue polypeptide: MMQHASPAPALTMMATQNVPPPPYQDSPQMTATAQPPSKAQAVHISAPSATASTPVPSAPIDPQAQLEADKRAVYRHPLFPLLTLLFEKCEQATQGSECITSASFDVDIENFVHQQEQEHKPFFSDDPELDNLMVKAIQVLRIHLLELEKVNELCKDFCNRYITCLKTKMHSDNLLRNDLGGPYSPNQPSINLHSQDLLQNSPNSMSGVSNNPQGIVVPASALQQGNIAMTTVNSQVVSGGALYQPVTMVTSQGQVVTQAIPQGAIQIQNTQVNLDLTSLLDNEDKKSKNKRGVLPKHATNIMRSWLFQHLMHPYPTEDEKRQIAAQTNLTLLQVNNWFINARRRILQPMLDASNPDPAPKAKKIKSQHRPTQRFWPNSIAAGVLQQQGGTPGTNPDGSINLDNLQSLSSDNATMAMQQAMMAAHDDSLDGTEEEDEDDMEEEEEEEEELEEEADELQTTNVSDLGLEHSDSLE.

Residues 1-42 form a disordered region; the sequence is MMQHASPAPALTMMATQNVPPPPYQDSPQMTATAQPPSKAQA. A compositionally biased stretch (polar residues) spans 26–38; that stretch reads DSPQMTATAQPPS. The region spanning 96–179 is the MEIS N-terminal domain; that stretch reads GSECITSASF…MHSDNLLRND (84 aa). Positions 291–350 form a DNA-binding region, homeobox; sequence KRGVLPKHATNIMRSWLFQHLMHPYPTEDEKRQIAAQTNLTLLQVNNWFINARRRILQPM. 3 disordered regions span residues 351-371, 385-405, and 423-474; these read LDAS…QHRP, LQQQ…LDNL, and AAHD…DSLE. Over residues 361-371 the composition is skewed to basic residues; the sequence is KAKKIKSQHRP. Acidic residues predominate over residues 429 to 456; the sequence is LDGTEEEDEDDMEEEEEEEEELEEEADE.

This sequence belongs to the TALE/MEIS homeobox family.

The protein localises to the nucleus. This is Homeobox protein PKNOX2 (Pknox2) from Mus musculus (Mouse).